Reading from the N-terminus, the 238-residue chain is Protein-lysine N-methyltransferase efm4 (238 aa).

This sequence belongs to the class I-like SAM-binding methyltransferase superfamily. EFM4 family.

It is found in the cytoplasm. Its subcellular location is the nucleus. In terms of biological role, S-adenosyl-L-methionine-dependent protein-lysine N-methyltransferase that mono- and dimethylates elongation factor 1-alpha at 'Lys-316'. May play a role in intracellular transport. The polypeptide is Protein-lysine N-methyltransferase efm4 (Schizosaccharomyces pombe (strain 972 / ATCC 24843) (Fission yeast)).